The following is a 415-amino-acid chain: Polyadenylate-binding protein RBP45C (415 aa).

A disordered region spans residues 1–77 (MMQQPPPASN…GGSQNPGSAG (77 aa)). Residues 23 to 64 (QQAYLQQQQSWMMQHQQQQQGQPPAGWNQQSAPSSGQPQQQQ) are compositionally biased toward low complexity. 3 RRM domains span residues 80–160 (RSLW…WAQL), 173–252 (HTVF…PAAN), and 278–350 (TTIF…WGRS). Residues 344 to 356 (RLSWGRSPSNKQT) show a composition bias toward polar residues. The segment at 344–369 (RLSWGRSPSNKQTQPDQAQYGGGGGY) is disordered.

This sequence belongs to the polyadenylate-binding RBP45 family. As to quaternary structure, interacts with the poly(A) tail of mRNA in nucleus. Mostly expressed in seedlings and stems, and, to a lower extent, in leaves and flowers.

Its subcellular location is the nucleus. Its function is as follows. Heterogeneous nuclear ribonucleoprotein (hnRNP)-protein binding the poly(A) tail of mRNA and probably involved in some steps of pre-mRNA maturation. This is Polyadenylate-binding protein RBP45C (RBP45C) from Arabidopsis thaliana (Mouse-ear cress).